Consider the following 257-residue polypeptide: UPF0246 protein BF4021 (257 aa).

It belongs to the UPF0246 family.

The polypeptide is UPF0246 protein BF4021 (Bacteroides fragilis (strain YCH46)).